A 308-amino-acid chain; its full sequence is Elongation factor Ts (308 aa).

Residues 80 to 83 (TDFV) are involved in Mg(2+) ion dislocation from EF-Tu.

The protein belongs to the EF-Ts family.

Its subcellular location is the cytoplasm. Associates with the EF-Tu.GDP complex and induces the exchange of GDP to GTP. It remains bound to the aminoacyl-tRNA.EF-Tu.GTP complex up to the GTP hydrolysis stage on the ribosome. This chain is Elongation factor Ts, found in Rhizobium johnstonii (strain DSM 114642 / LMG 32736 / 3841) (Rhizobium leguminosarum bv. viciae).